The following is a 329-amino-acid chain: Glycerol-3-phosphate dehydrogenase [NAD(P)+] (329 aa).

Trp-11 and Lys-101 together coordinate NADPH. Sn-glycerol 3-phosphate contacts are provided by Lys-101, Gly-132, and Ser-134. Ala-136 provides a ligand contact to NADPH. Sn-glycerol 3-phosphate is bound by residues Lys-188, Asp-241, Ser-251, Arg-252, and Asn-253. Lys-188 (proton acceptor) is an active-site residue. Arg-252 is an NADPH binding site. Residue Glu-278 coordinates NADPH.

Belongs to the NAD-dependent glycerol-3-phosphate dehydrogenase family.

The protein resides in the cytoplasm. The enzyme catalyses sn-glycerol 3-phosphate + NAD(+) = dihydroxyacetone phosphate + NADH + H(+). It carries out the reaction sn-glycerol 3-phosphate + NADP(+) = dihydroxyacetone phosphate + NADPH + H(+). It participates in membrane lipid metabolism; glycerophospholipid metabolism. Its function is as follows. Catalyzes the reduction of the glycolytic intermediate dihydroxyacetone phosphate (DHAP) to sn-glycerol 3-phosphate (G3P), the key precursor for phospholipid synthesis. This is Glycerol-3-phosphate dehydrogenase [NAD(P)+] from Onion yellows phytoplasma (strain OY-M).